An 800-amino-acid polypeptide reads, in one-letter code: Phenylalanine--tRNA ligase beta subunit (800 aa).

Residues 39–154 (TKDIKNLVVG…ESQVPGTDAL (116 aa)) enclose the tRNA-binding domain. The region spanning 408-483 (AFITPIDITA…RIYGYDDIPS (76 aa)) is the B5 domain. Mg(2+) contacts are provided by D461, D467, E470, and E471. The FDX-ACB domain maps to 708–800 (PRFPGMSRDI…ALIEQGAVIR (93 aa)).

This sequence belongs to the phenylalanyl-tRNA synthetase beta subunit family. Type 1 subfamily. In terms of assembly, tetramer of two alpha and two beta subunits. Requires Mg(2+) as cofactor.

It localises to the cytoplasm. It catalyses the reaction tRNA(Phe) + L-phenylalanine + ATP = L-phenylalanyl-tRNA(Phe) + AMP + diphosphate + H(+). The chain is Phenylalanine--tRNA ligase beta subunit from Staphylococcus aureus (strain MSSA476).